The primary structure comprises 254 residues: Large ribosomal subunit protein uL4 (254 aa).

Belongs to the universal ribosomal protein uL4 family. Part of the 50S ribosomal subunit.

One of the primary rRNA binding proteins, this protein initially binds near the 5'-end of the 23S rRNA. It is important during the early stages of 50S assembly. It makes multiple contacts with different domains of the 23S rRNA in the assembled 50S subunit and ribosome. In terms of biological role, forms part of the polypeptide exit tunnel. This chain is Large ribosomal subunit protein uL4, found in Methanothermobacter thermautotrophicus (strain ATCC 29096 / DSM 1053 / JCM 10044 / NBRC 100330 / Delta H) (Methanobacterium thermoautotrophicum).